A 182-amino-acid polypeptide reads, in one-letter code: ATP synthase subunit delta (182 aa).

Belongs to the ATPase delta chain family. In terms of assembly, F-type ATPases have 2 components, F(1) - the catalytic core - and F(0) - the membrane proton channel. F(1) has five subunits: alpha(3), beta(3), gamma(1), delta(1), epsilon(1). CF(0) has four main subunits: a(1), b(1), b'(1) and c(10-14). The alpha and beta chains form an alternating ring which encloses part of the gamma chain. F(1) is attached to F(0) by a central stalk formed by the gamma and epsilon chains, while a peripheral stalk is formed by the delta, b and b' chains.

It localises to the cellular thylakoid membrane. Its function is as follows. F(1)F(0) ATP synthase produces ATP from ADP in the presence of a proton or sodium gradient. F-type ATPases consist of two structural domains, F(1) containing the extramembraneous catalytic core and F(0) containing the membrane proton channel, linked together by a central stalk and a peripheral stalk. During catalysis, ATP synthesis in the catalytic domain of F(1) is coupled via a rotary mechanism of the central stalk subunits to proton translocation. Functionally, this protein is part of the stalk that links CF(0) to CF(1). It either transmits conformational changes from CF(0) to CF(1) or is implicated in proton conduction. In Trichodesmium erythraeum (strain IMS101), this protein is ATP synthase subunit delta.